The primary structure comprises 65 residues: Large ribosomal subunit protein bL35 (65 aa).

This sequence belongs to the bacterial ribosomal protein bL35 family.

The sequence is that of Large ribosomal subunit protein bL35 from Psychrobacter sp. (strain PRwf-1).